A 290-amino-acid polypeptide reads, in one-letter code: tRNA (adenine(58)-N(1))-methyltransferase catalytic subunit TRMT61A (290 aa).

Ser2 carries the post-translational modification N-acetylserine. Substrate regions lie at residues 20-22 (LGH), 35-42 (QTQTRHGV), 64-65 (GW), 85-89 (QILYS), and 110-117 (SGTGSGSV). Residues Leu87, 114–116 (SGS), Glu135, Arg140, 163–164 (DV), and Asp181 each bind S-adenosyl-L-methionine. Substrate stretches follow at residues 180–183 (LDIP) and 205–212 (SFSPCIEQ). Position 264 is a phosphoserine (Ser264). Residue Thr279 participates in substrate binding.

It belongs to the class I-like SAM-binding methyltransferase superfamily. TRM61 family. Heterotetramer; composed of two copies of TRMT6 and two copies of TRMT61A.

It is found in the nucleus. It catalyses the reaction adenosine(58) in tRNA + S-adenosyl-L-methionine = N(1)-methyladenosine(58) in tRNA + S-adenosyl-L-homocysteine + H(+). It carries out the reaction an adenosine in mRNA + S-adenosyl-L-methionine = an N(1)-methyladenosine in mRNA + S-adenosyl-L-homocysteine + H(+). Its function is as follows. Catalytic subunit of tRNA (adenine-N(1)-)-methyltransferase, which catalyzes the formation of N(1)-methyladenine at position 58 (m1A58) in initiator methionyl-tRNA. Catalytic subunit of mRNA N(1)-methyltransferase complex, which mediates methylation of adenosine residues at the N(1) position of a small subset of mRNAs: N(1) methylation takes place in tRNA T-loop-like structures of mRNAs and is only present at low stoichiometries. The sequence is that of tRNA (adenine(58)-N(1))-methyltransferase catalytic subunit TRMT61A (Trmt61a) from Mus musculus (Mouse).